A 500-amino-acid polypeptide reads, in one-letter code: L-arabinose isomerase (500 aa).

Residues Glu306, Glu333, His350, and His450 each coordinate Mn(2+).

The protein belongs to the arabinose isomerase family. Homohexamer. Requires Mn(2+) as cofactor.

It catalyses the reaction beta-L-arabinopyranose = L-ribulose. Its pathway is carbohydrate degradation; L-arabinose degradation via L-ribulose; D-xylulose 5-phosphate from L-arabinose (bacterial route): step 1/3. Functionally, catalyzes the conversion of L-arabinose to L-ribulose. The polypeptide is L-arabinose isomerase (Escherichia coli O7:K1 (strain IAI39 / ExPEC)).